The sequence spans 318 residues: MTEAGAVVLTAVLLDLLFGDPRWLPHPVVAIGKLITVLEKFLRRLVTNERVGGVLLLLLAVGITAGAAWGAVRGASLVHPLAGVVVSALLGWTCLAARSLHGESKRVADALVRGDLPEARRYLSFIVGRDTAGLSEPEVWRGAVETVAENTSDGVIAPLLFFMIGGAPLALAYKAVNTLDSMVGYKNERYLHFGWASARSDDLANLIPARLTGLLMTLAAPLAGLSGRGAWRIMLRDGRNHSSPNSGIPEAAAAGALGVQLGGTNVYFGKPVAKPTIGDPLKPLDATAWRGTVRLMYGAECLLVLLAAVMTTILTITD.

A run of 5 helical transmembrane segments spans residues 51–71 (VGGV…AWGA), 77–97 (LVHP…CLAA), 153–173 (DGVI…ALAY), 206–226 (LIPA…AGLS), and 296–316 (MYGA…ILTI).

The protein belongs to the CobD/CbiB family.

It is found in the cell membrane. It participates in cofactor biosynthesis; adenosylcobalamin biosynthesis. Its function is as follows. Converts cobyric acid to cobinamide by the addition of aminopropanol on the F carboxylic group. The sequence is that of Cobalamin biosynthesis protein CobD from Geobacter metallireducens (strain ATCC 53774 / DSM 7210 / GS-15).